Reading from the N-terminus, the 362-residue chain is Phosphoserine aminotransferase (362 aa).

R42 contributes to the L-glutamate binding site. Pyridoxal 5'-phosphate contacts are provided by W102, T154, D174, and Q197. K198 is modified (N6-(pyridoxal phosphate)lysine). 239 to 240 (NT) provides a ligand contact to pyridoxal 5'-phosphate.

This sequence belongs to the class-V pyridoxal-phosphate-dependent aminotransferase family. SerC subfamily. Homodimer. It depends on pyridoxal 5'-phosphate as a cofactor.

The protein resides in the cytoplasm. The catalysed reaction is O-phospho-L-serine + 2-oxoglutarate = 3-phosphooxypyruvate + L-glutamate. The enzyme catalyses 4-(phosphooxy)-L-threonine + 2-oxoglutarate = (R)-3-hydroxy-2-oxo-4-phosphooxybutanoate + L-glutamate. Its pathway is amino-acid biosynthesis; L-serine biosynthesis; L-serine from 3-phospho-D-glycerate: step 2/3. The protein operates within cofactor biosynthesis; pyridoxine 5'-phosphate biosynthesis; pyridoxine 5'-phosphate from D-erythrose 4-phosphate: step 3/5. In terms of biological role, catalyzes the reversible conversion of 3-phosphohydroxypyruvate to phosphoserine and of 3-hydroxy-2-oxo-4-phosphonooxybutanoate to phosphohydroxythreonine. This is Phosphoserine aminotransferase from Haemophilus ducreyi (strain 35000HP / ATCC 700724).